The primary structure comprises 201 residues: Small ribosomal subunit protein uS4c (201 aa).

Positions 13–43 (RRLGDLPGLSRKAIKRPYPPGEHGQKPRKPS) are disordered. In terms of domain architecture, S4 RNA-binding spans 90–154 (MRLDNTIFRL…SKQLVESYLA (65 aa)).

Belongs to the universal ribosomal protein uS4 family. In terms of assembly, part of the 30S ribosomal subunit. Contacts protein S5. The interaction surface between S4 and S5 is involved in control of translational fidelity.

It is found in the plastid. The protein localises to the chloroplast. One of the primary rRNA binding proteins, it binds directly to 16S rRNA where it nucleates assembly of the body of the 30S subunit. Its function is as follows. With S5 and S12 plays an important role in translational accuracy. This chain is Small ribosomal subunit protein uS4c (rps4), found in Porphyra purpurea (Red seaweed).